Reading from the N-terminus, the 195-residue chain is MSGGKPRSNTRTVAMLAGVVVLMGALSWAAVPFYSWFCKVTGFAGTTNVAEAASDTVLDEKIRVRFDANADSNLGWTFRPMQREMELKIGENAIAFYEAINNTDEPVTGTASYNVAPDAAGYFFNKIECFCFTEQTLQPGERVEMPVSFFVDADLVNDRDAGRIRDITLSYTFHRTDPPAPKQAALDAKTEPTVN.

Over 1-7 (MSGGKPR) the chain is Cytoplasmic. A helical; Signal-anchor for type II membrane protein transmembrane segment spans residues 8-30 (SNTRTVAMLAGVVVLMGALSWAA). At 31–195 (VPFYSWFCKV…LDAKTEPTVN (165 aa)) the chain is on the periplasmic side.

Belongs to the COX11/CtaG family.

It is found in the cell inner membrane. Its function is as follows. Exerts its effect at some terminal stage of cytochrome c oxidase synthesis, probably by being involved in the insertion of the copper B into subunit I. In Paracoccus denitrificans (strain Pd 1222), this protein is Cytochrome c oxidase assembly protein CtaG.